The primary structure comprises 1788 residues: Protein TIC 214 (1788 aa).

6 helical membrane-spanning segments follow: residues 25-45 (IINS…FSIG), 70-90 (IGFI…PLHL), 95-115 (PHTI…WNNH), 132-152 (LNIQ…HFIL), 180-200 (VGWL…LFWI), and 223-243 (IFSI…PSPL). 2 disordered regions span residues 248–297 (LKKT…EEKE) and 1482–1526 (DLEN…DFDR). Basic and acidic residues-rich tracts occupy residues 253–277 (KREE…EKGT) and 1513–1526 (PLKK…DFDR).

This sequence belongs to the TIC214 family. In terms of assembly, part of the Tic complex.

Its subcellular location is the plastid. It is found in the chloroplast inner membrane. Functionally, involved in protein precursor import into chloroplasts. May be part of an intermediate translocation complex acting as a protein-conducting channel at the inner envelope. The sequence is that of Protein TIC 214 from Ranunculus macranthus (Large buttercup).